The chain runs to 143 residues: Nucleoside diphosphate kinase (143 aa).

Positions 11, 59, 87, 93, 104, and 114 each coordinate ATP. The active-site Pros-phosphohistidine intermediate is histidine 117.

It belongs to the NDK family. As to quaternary structure, homotetramer. Mg(2+) serves as cofactor.

The protein resides in the cytoplasm. It catalyses the reaction a 2'-deoxyribonucleoside 5'-diphosphate + ATP = a 2'-deoxyribonucleoside 5'-triphosphate + ADP. The enzyme catalyses a ribonucleoside 5'-diphosphate + ATP = a ribonucleoside 5'-triphosphate + ADP. Functionally, major role in the synthesis of nucleoside triphosphates other than ATP. The ATP gamma phosphate is transferred to the NDP beta phosphate via a ping-pong mechanism, using a phosphorylated active-site intermediate. In Pseudoalteromonas translucida (strain TAC 125), this protein is Nucleoside diphosphate kinase.